The sequence spans 111 residues: Large ribosomal subunit protein uL24 (111 aa).

The protein belongs to the universal ribosomal protein uL24 family. As to quaternary structure, part of the 50S ribosomal subunit.

Its function is as follows. One of two assembly initiator proteins, it binds directly to the 5'-end of the 23S rRNA, where it nucleates assembly of the 50S subunit. One of the proteins that surrounds the polypeptide exit tunnel on the outside of the subunit. This Chlamydia muridarum (strain MoPn / Nigg) protein is Large ribosomal subunit protein uL24.